Consider the following 476-residue polypeptide: Sulfite exporter TauE/SafE family protein 3 (476 aa).

12 consecutive transmembrane segments (helical) span residues 8–28, 76–92, 99–115, 120–142, 151–171, 172–192, 257–277, 291–311, 339–359, 360–380, 397–417, and 433–453; these read WLGL…FAFV, FNWQ…FGAA, VGGG…IIGF, ATAI…NLRL, IIDY…ISIG, VAFN…VLFL, VYWK…ALQI, VINL…AVAL, FGII…FIMG, PLFL…TFAM, FPVP…WVGQ, and IIFI…GVGI.

This sequence belongs to the 4-toluene sulfonate uptake permease (TSUP) (TC 2.A.102) family.

It is found in the membrane. This chain is Sulfite exporter TauE/SafE family protein 3, found in Arabidopsis thaliana (Mouse-ear cress).